The chain runs to 556 residues: Glutamine--tRNA ligase (556 aa).

The 'HIGH' region motif lies at 34 to 44; sequence PEPNGYLHIGH. ATP contacts are provided by residues 35 to 37 and 41 to 47; these read EPN and HIGHAKS. L-glutamine-binding residues include Asp67 and Tyr212. ATP-binding positions include Thr231, 261–262, and 269–271; these read RL and MSK. A 'KMSKS' region motif is present at residues 268 to 272; the sequence is VMSKR.

This sequence belongs to the class-I aminoacyl-tRNA synthetase family. In terms of assembly, monomer.

Its subcellular location is the cytoplasm. The catalysed reaction is tRNA(Gln) + L-glutamine + ATP = L-glutaminyl-tRNA(Gln) + AMP + diphosphate. In Vibrio parahaemolyticus serotype O3:K6 (strain RIMD 2210633), this protein is Glutamine--tRNA ligase.